The primary structure comprises 257 residues: MELTTKLVGTCSALDRLYQSGSAKCLFPRNSRAGLEAVLLNTAGGVTGGDRLSFSAQVRAGTRLSVTTQACERAYRAQPGETGQVRNHLSVATGARMNWLPQETILYDGSSLDRRLSVEIEPGASLLMVEPLVFGRIEMGESLNDARFCDRIEITRRGRPIFLDATRLQGGIAAHLAKPFIANGAGAMALLVYLAENAEAVLPRLRQMLPECAGASLIGEDLLVMRVLAADSFLLRQSLLPALRLLNNNEIPRCWTI.

This sequence belongs to the UreD family. As to quaternary structure, ureD, UreF and UreG form a complex that acts as a GTP-hydrolysis-dependent molecular chaperone, activating the urease apoprotein by helping to assemble the nickel containing metallocenter of UreC. The UreE protein probably delivers the nickel.

It localises to the cytoplasm. Its function is as follows. Required for maturation of urease via the functional incorporation of the urease nickel metallocenter. This Ruegeria pomeroyi (strain ATCC 700808 / DSM 15171 / DSS-3) (Silicibacter pomeroyi) protein is Urease accessory protein UreD.